Consider the following 114-residue polypeptide: rRNA-processing protein cgrA (114 aa).

The disordered stretch occupies residues methionine 1–arginine 96. Residues alanine 40–arginine 101 are a coiled coil. Residues lysine 41 to lysine 93 show a composition bias toward basic and acidic residues.

It belongs to the CGR1 family.

Its subcellular location is the nucleus. It is found in the nucleolus. In terms of biological role, involved in nucleolar integrity and required for processing of the pre-rRNA for the 60S ribosome subunit. This Aspergillus terreus (strain NIH 2624 / FGSC A1156) protein is rRNA-processing protein cgrA (cgrA).